We begin with the raw amino-acid sequence, 267 residues long: Ribosomal RNA small subunit methyltransferase A (267 aa).

Residues L20, G45, E68, D91, and N113 each contribute to the S-adenosyl-L-methionine site.

This sequence belongs to the class I-like SAM-binding methyltransferase superfamily. rRNA adenine N(6)-methyltransferase family. RsmA subfamily.

It is found in the cytoplasm. It carries out the reaction adenosine(1518)/adenosine(1519) in 16S rRNA + 4 S-adenosyl-L-methionine = N(6)-dimethyladenosine(1518)/N(6)-dimethyladenosine(1519) in 16S rRNA + 4 S-adenosyl-L-homocysteine + 4 H(+). Functionally, specifically dimethylates two adjacent adenosines (A1518 and A1519) in the loop of a conserved hairpin near the 3'-end of 16S rRNA in the 30S particle. May play a critical role in biogenesis of 30S subunits. This chain is Ribosomal RNA small subunit methyltransferase A, found in Blochmanniella pennsylvanica (strain BPEN).